Here is a 301-residue protein sequence, read N- to C-terminus: Cell division control protein 2 homolog 1 (301 aa).

Residues Y5–F297 enclose the Protein kinase domain. ATP contacts are provided by residues I11 to V19 and K34. S15 bears the Phosphoserine mark. Y16 is subject to Phosphotyrosine. D127 (proton acceptor) is an active-site residue. Position 160 is a phosphothreonine; by CAK (T160).

It belongs to the protein kinase superfamily. CMGC Ser/Thr protein kinase family. CDC2/CDKX subfamily. In terms of assembly, forms a stable but non-covalent complex with a regulatory subunit and with a cyclin.

The catalysed reaction is L-seryl-[protein] + ATP = O-phospho-L-seryl-[protein] + ADP + H(+). It catalyses the reaction L-threonyl-[protein] + ATP = O-phospho-L-threonyl-[protein] + ADP + H(+). Its activity is regulated as follows. Phosphorylation at Ser-15 or Tyr-16 inactivates the enzyme, while phosphorylation at Thr-160 activates it. Functionally, probably involved in the control of the cell cycle. This is Cell division control protein 2 homolog 1 (CRK1) from Trypanosoma congolense.